A 316-amino-acid polypeptide reads, in one-letter code: tRNA-splicing endonuclease subunit Sen34 (316 aa).

Residues 120-184 (QAAKKQKLEQ…PGPSNGVTPL (65 aa)) form a disordered region. 2 stretches are compositionally biased toward polar residues: residues 144–159 (EATQGSETSDDGQPSA) and 168–181 (LDSSSPQPGPSNGV). Active-site residues include Tyr253, His261, and Lys292.

Belongs to the tRNA-intron endonuclease family. In terms of assembly, tRNA splicing endonuclease is a heterotetramer composed of TSEN2, TSEN15, TSEN34/LENG5 and TSEN54. tRNA splicing endonuclease complex also contains proteins of the pre-mRNA 3'-end processing machinery such as CLP1, CPSF1, CPSF4 and CSTF2.

It localises to the nucleus. The protein localises to the nucleolus. The enzyme catalyses pretRNA = a 3'-half-tRNA molecule with a 5'-OH end + a 5'-half-tRNA molecule with a 2',3'-cyclic phosphate end + an intron with a 2',3'-cyclic phosphate and a 5'-hydroxyl terminus.. In terms of biological role, constitutes one of the two catalytic subunit of the tRNA-splicing endonuclease complex, a complex responsible for identification and cleavage of the splice sites in pre-tRNA. It cleaves pre-tRNA at the 5'- and 3'-splice sites to release the intron. The products are an intron and two tRNA half-molecules bearing 2',3'-cyclic phosphate and 5'-OH termini. There are no conserved sequences at the splice sites, but the intron is invariably located at the same site in the gene, placing the splice sites an invariant distance from the constant structural features of the tRNA body. The tRNA splicing endonuclease is also involved in mRNA processing via its association with pre-mRNA 3'-end processing factors, establishing a link between pre-tRNA splicing and pre-mRNA 3'-end formation, suggesting that the endonuclease subunits function in multiple RNA-processing events. The chain is tRNA-splicing endonuclease subunit Sen34 (Tsen34) from Mus musculus (Mouse).